A 493-amino-acid chain; its full sequence is Maintenance of mitochondrial morphology protein 1 (493 aa).

The Lumenal segment spans residues 1–23; that stretch reads MSQHSQYGVPGVPAQSSLSFTQG. A helical transmembrane segment spans residues 24-44; that stretch reads FLLGQLSVVLLIGAFIKFFIF. Residues 45–493 lie on the Cytoplasmic side of the membrane; sequence GEAPAPPSRG…GSMPRVVRTP (449 aa). Residues 52–104 form a disordered region; sequence SRGLASRTASHHRSYSINQGDNNANNNTNNGSSPRTLREKPSTSNVLRPVPSS. Low complexity predominate over residues 69-81; it reads NQGDNNANNNTNN. Over residues 93 to 104 the composition is skewed to polar residues; it reads STSNVLRPVPSS. The region spanning 140 to 391 is the SMP-LTD domain; that stretch reads QPESLDWFNV…EPRVQVVGLP (252 aa). The segment at 420–493 is disordered; that stretch reads SSRSGGGPVE…GSMPRVVRTP (74 aa).

The protein belongs to the MMM1 family. As to quaternary structure, homodimer. Component of the ER-mitochondria encounter structure (ERMES) or MDM complex, composed of mmm1, mdm10, mdm12 and mdm34. A mmm1 homodimer associates with one molecule of mdm12 on each side in a pairwise head-to-tail manner, and the SMP-LTD domains of mmm1 and mdm12 generate a continuous hydrophobic tunnel for phospholipid trafficking.

It is found in the endoplasmic reticulum membrane. In terms of biological role, component of the ERMES/MDM complex, which serves as a molecular tether to connect the endoplasmic reticulum (ER) and mitochondria. Components of this complex are involved in the control of mitochondrial shape and protein biogenesis, and function in nonvesicular lipid trafficking between the ER and mitochondria. The mdm12-mmm1 subcomplex functions in the major beta-barrel assembly pathway that is responsible for biogenesis of all outer membrane beta-barrel proteins, and acts in a late step after the SAM complex. The mdm10-mdm12-mmm1 subcomplex further acts in the TOM40-specific pathway after the action of the mdm12-mmm1 complex. Essential for establishing and maintaining the structure of mitochondria and maintenance of mtDNA nucleoids. The protein is Maintenance of mitochondrial morphology protein 1 of Talaromyces stipitatus (strain ATCC 10500 / CBS 375.48 / QM 6759 / NRRL 1006) (Penicillium stipitatum).